Consider the following 1116-residue polypeptide: Protein translocase subunit SecA (1116 aa).

Residues Gln177, 195 to 199 (GEGKT), and Asp692 each bind ATP.

The protein belongs to the SecA family. Monomer and homodimer. Part of the essential Sec protein translocation apparatus which comprises SecA, SecYEG and auxiliary proteins SecDF. Other proteins may also be involved.

The protein resides in the cell inner membrane. It localises to the cytoplasm. It carries out the reaction ATP + H2O + cellular proteinSide 1 = ADP + phosphate + cellular proteinSide 2.. In terms of biological role, part of the Sec protein translocase complex. Interacts with the SecYEG preprotein conducting channel. Has a central role in coupling the hydrolysis of ATP to the transfer of proteins into and across the cell membrane, serving as an ATP-driven molecular motor driving the stepwise translocation of polypeptide chains across the membrane. This Flavobacterium psychrophilum (strain ATCC 49511 / DSM 21280 / CIP 103535 / JIP02/86) protein is Protein translocase subunit SecA.